Here is a 361-residue protein sequence, read N- to C-terminus: UDP-N-acetylglucosamine--N-acetylmuramyl-(pentapeptide) pyrophosphoryl-undecaprenol N-acetylglucosamine transferase (361 aa).

UDP-N-acetyl-alpha-D-glucosamine contacts are provided by residues 12–14 (TGG), Asn-124, Arg-163, Ser-189, Ile-241, 260–265 (ALTVSE), and Gln-286.

This sequence belongs to the glycosyltransferase 28 family. MurG subfamily.

Its subcellular location is the cell inner membrane. It catalyses the reaction di-trans,octa-cis-undecaprenyl diphospho-N-acetyl-alpha-D-muramoyl-L-alanyl-D-glutamyl-meso-2,6-diaminopimeloyl-D-alanyl-D-alanine + UDP-N-acetyl-alpha-D-glucosamine = di-trans,octa-cis-undecaprenyl diphospho-[N-acetyl-alpha-D-glucosaminyl-(1-&gt;4)]-N-acetyl-alpha-D-muramoyl-L-alanyl-D-glutamyl-meso-2,6-diaminopimeloyl-D-alanyl-D-alanine + UDP + H(+). It participates in cell wall biogenesis; peptidoglycan biosynthesis. Functionally, cell wall formation. Catalyzes the transfer of a GlcNAc subunit on undecaprenyl-pyrophosphoryl-MurNAc-pentapeptide (lipid intermediate I) to form undecaprenyl-pyrophosphoryl-MurNAc-(pentapeptide)GlcNAc (lipid intermediate II). The protein is UDP-N-acetylglucosamine--N-acetylmuramyl-(pentapeptide) pyrophosphoryl-undecaprenol N-acetylglucosamine transferase of Aeromonas hydrophila subsp. hydrophila (strain ATCC 7966 / DSM 30187 / BCRC 13018 / CCUG 14551 / JCM 1027 / KCTC 2358 / NCIMB 9240 / NCTC 8049).